A 39-amino-acid polypeptide reads, in one-letter code: Phospholipase A2 (39 aa).

His-36 is an active-site residue.

This sequence belongs to the phospholipase A2 family. Group III subfamily. Ca(2+) serves as cofactor. Expressed by the venom gland.

It localises to the secreted. The catalysed reaction is a 1,2-diacyl-sn-glycero-3-phosphocholine + H2O = a 1-acyl-sn-glycero-3-phosphocholine + a fatty acid + H(+). Its function is as follows. PLA2 catalyzes the calcium-dependent hydrolysis of the 2-acyl groups in 3-sn-phosphoglycerides. This Heloderma horridum horridum (Mexican beaded lizard) protein is Phospholipase A2.